The primary structure comprises 201 residues: Ciliary microtubule inner protein 2C (201 aa).

The protein belongs to the CIMIP2 family. In terms of assembly, microtubule inner protein component of sperm flagellar doublet microtubules.

The protein resides in the cytoplasm. The protein localises to the cytoskeleton. It is found in the cilium axoneme. Its subcellular location is the flagellum axoneme. Functionally, microtubule inner protein (MIP) part of the dynein-decorated doublet microtubules (DMTs) in cilia axoneme, which is required for motile cilia beating. Binds to the intra-tubulin interfaces. In Bos taurus (Bovine), this protein is Ciliary microtubule inner protein 2C (CIMIP2C).